The chain runs to 646 residues: Secretogranin-1 (646 aa).

The signal sequence occupies residues 1-20 (MQPAALLGLLGATVVAAVSS). An intrachain disulfide couples cysteine 36 to cysteine 57. Residues 67–90 (ELKNEEKSENENTRFEVRLLRDPA) show a composition bias toward basic and acidic residues. The tract at residues 67–483 (ELKNEEKSEN…GKQYAPHHIT (417 aa)) is disordered. Serine 74 is subject to Phosphoserine. Residues threonine 79 and threonine 92 each carry the phosphothreonine modification. Residues serine 93, serine 99, serine 100, and serine 104 each carry the phosphoserine modification. Serine 93 is a glycosylation site (O-linked (Xyl...) (chondroitin sulfate) serine). Threonine 113 is a glycosylation site (O-linked (GalNAc...) threonine). Composition is skewed to basic and acidic residues over residues 119 to 128 (SGGHSRERAG) and 137 to 173 (KEAK…ERLS). Residues serine 123, serine 146, and serine 168 each carry the phosphoserine modification. Positions 182 to 191 (AFLNQRNQTP) are enriched in polar residues. A glycan (O-linked (GalNAc...) threonine) is linked at threonine 190. A Phosphoserine modification is found at serine 205. The span at 208-228 (GLEKSHSRERSSQESGEETKS) shows a compositional bias: basic and acidic residues. Serine 222 is a glycosylation site (O-linked (Xyl...) (chondroitin sulfate) serine). Basic residues predominate over residues 260 to 270 (RHSRPRHHHGR). A phosphoserine mark is found at serine 276, serine 277, and serine 295. Sulfotyrosine is present on tyrosine 315. The span at 340–361 (GRGEHQALRRPSEESLEQENKR) shows a compositional bias: basic and acidic residues. Serine 351 and serine 354 each carry phosphoserine. Tyrosine 374 bears the Phosphotyrosine mark. A phosphoserine mark is found at serine 375 and serine 378. Basic and acidic residues predominate over residues 406-425 (TDEKRFLGETHHRVQESQRD). The residue at position 441 (tyrosine 441) is a Sulfotyrosine. 2 stretches are compositionally biased toward basic and acidic residues: residues 442-451 (GEEKGEEAAR) and 459-472 (DPRD…EARL). Pyrrolidone carboxylic acid; in secretogranin-1(476-566) is present on glutamine 476. Phosphoserine is present on residues serine 502, serine 503, and serine 514. A Sulfotyrosine modification is found at tyrosine 535. Position 567 is a pyrrolidone carboxylic acid; in peptide BAM-1745 (glutamine 567). Serine 584 bears the Phosphoserine mark. A disordered region spans residues 588–620 (PDFYDSEEQMSPQHTAENEEEKAGQGVLTEEEE). Tyrosine 591 is subject to Sulfotyrosine. Serine 593 and serine 598 each carry phosphoserine. Position 634 is a pyrrolidone carboxylic acid; in Secretolytin; partial (glutamine 634).

Belongs to the chromogranin/secretogranin protein family. In terms of assembly, interacts with ITPR1 in the secretory granules. Post-translationally, O-glycosylated by the trisaccharide, GalNAc-Gal-NeuAc, on 2 sites in the N-terminal. May be glycated. Extensively phosphorylated. In terms of processing, differentially processed on numerous sites throughout the sequence depending on tissue type.

The protein localises to the cytoplasmic vesicle. It localises to the secretory vesicle membrane. It is found in the secreted. Functionally, secretogranin-1 is a neuroendocrine secretory granule protein, which may be the precursor for other biologically active peptides. The 16 pairs of basic AA distributed throughout its sequence may be used as proteolytic cleavage sites. Secretolytin has antibacterial activity. The protein is Secretogranin-1 (CHGB) of Bos taurus (Bovine).